A 154-amino-acid chain; its full sequence is Peptide deformylase (154 aa).

2 residues coordinate Fe cation: cysteine 90 and histidine 132. Residue glutamate 133 is part of the active site. Residue histidine 136 participates in Fe cation binding.

This sequence belongs to the polypeptide deformylase family. It depends on Fe(2+) as a cofactor.

The catalysed reaction is N-terminal N-formyl-L-methionyl-[peptide] + H2O = N-terminal L-methionyl-[peptide] + formate. Functionally, removes the formyl group from the N-terminal Met of newly synthesized proteins. Requires at least a dipeptide for an efficient rate of reaction. N-terminal L-methionine is a prerequisite for activity but the enzyme has broad specificity at other positions. This Desulforudis audaxviator (strain MP104C) protein is Peptide deformylase.